The chain runs to 1582 residues: Nik-related protein kinase (1582 aa).

A Protein kinase domain is found at 25–313 (FSLDKTIGLG…SANMLQHPFV (289 aa)). Residues 31–39 (IGLGTYGRI) and K54 contribute to the ATP site. D177 acts as the Proton acceptor in catalysis. 3 stretches are compositionally biased toward low complexity: residues 492–507 (QVQSQVSKKQQAQTQT), 527–538 (PEQQRQGQAPEQ), and 551–572 (EQNQAPEQPEVQEQAAEPAQAE). The tract at residues 492–579 (QVQSQVSKKQ…QAETEAEEPE (88 aa)) is disordered. Residues 725–759 (QRRQRRWEDIFNQHEEELRQVDKDKEDESSDNDEV) are a coiled coil. Disordered stretches follow at residues 783–859 (EVQE…PPYS) and 926–1156 (ASAD…GSGM). Composition is skewed to polar residues over residues 803–814 (FSSSVPQRSLLE), 825–834 (RSSQNRQNWL), and 850–859 (RRSQSSPPYS). A phosphoserine mark is found at S852 and S855. Over residues 926-944 (ASADTDGDDDDESNDTFED) the composition is skewed to acidic residues. Basic and acidic residues-rich tracts occupy residues 965–978 (VCKDHDDDNNKFVD) and 999–1016 (GSCKQDGYDGSRGKEEAY). Phosphoserine is present on residues S1027, S1031, and S1034. 2 stretches are compositionally biased toward basic and acidic residues: residues 1043-1061 (QEEHAANIGSERRGSEGDG) and 1125-1135 (PDHESDNKDIS). Over residues 1136–1154 (ESSTQSDFSANHSSPSKGS) the composition is skewed to polar residues. One can recognise a CNH domain in the interval 1209–1552 (TSEICCGSLW…RFLCTRGDKL (344 aa)).

Belongs to the protein kinase superfamily. STE Ser/Thr protein kinase family. STE20 subfamily.

It catalyses the reaction L-seryl-[protein] + ATP = O-phospho-L-seryl-[protein] + ADP + H(+). It carries out the reaction L-threonyl-[protein] + ATP = O-phospho-L-threonyl-[protein] + ADP + H(+). Functionally, may phosphorylate cofilin-1 and induce actin polymerization through this process, during the late stages of embryogenesis. Involved in the TNF-alpha-induced signaling pathway. This Homo sapiens (Human) protein is Nik-related protein kinase (NRK).